The sequence spans 437 residues: Cysteine--tRNA ligase (437 aa).

Cysteine 31 contributes to the Zn(2+) binding site. A 'HIGH' region motif is present at residues 33–43; that stretch reads PTVYNDLHLGN. Positions 205, 230, and 234 each coordinate Zn(2+). Positions 262-266 match the 'KMSKS' region motif; that stretch reads KMSKS. An ATP-binding site is contributed by lysine 265.

The protein belongs to the class-I aminoacyl-tRNA synthetase family. Monomer. Requires Zn(2+) as cofactor.

It localises to the cytoplasm. The enzyme catalyses tRNA(Cys) + L-cysteine + ATP = L-cysteinyl-tRNA(Cys) + AMP + diphosphate. This chain is Cysteine--tRNA ligase (cysS), found in Mycoplasma pneumoniae (strain ATCC 29342 / M129 / Subtype 1) (Mycoplasmoides pneumoniae).